Reading from the N-terminus, the 432-residue chain is Cyclic di-GMP phosphodiesterase CdgJ (432 aa).

The region spanning 1-232 (MVRCLWAAEC…QRYVSPEHVI (232 aa)) is the EAL domain. In terms of domain architecture, HDOD spans 226–413 (VSPEHVIAMQ…CLELGFDLED (188 aa)).

The enzyme catalyses 3',3'-c-di-GMP + H2O = 5'-phosphoguanylyl(3'-&gt;5')guanosine + H(+). Its function is as follows. Phosphodiesterase (PDE) that catalyzes the hydrolysis of cyclic diguanylate (c-di-GMP). Positively regulates motility and negatively regulates biofilm formation. This Vibrio cholerae serotype O1 (strain ATCC 39315 / El Tor Inaba N16961) protein is Cyclic di-GMP phosphodiesterase CdgJ.